Reading from the N-terminus, the 523-residue chain is UvrABC system protein C (523 aa).

The 79-residue stretch at 15-93 folds into the GIY-YIG domain; the sequence is HLPGCYLFKD…IKKHWPRYNI (79 aa). One can recognise a UVR domain in the interval 197–232; sequence RELIESMETEMKEMAAKQMFEQAMELRDEIAALEYL.

It belongs to the UvrC family. Interacts with UvrB in an incision complex.

It is found in the cytoplasm. The UvrABC repair system catalyzes the recognition and processing of DNA lesions. UvrC both incises the 5' and 3' sides of the lesion. The N-terminal half is responsible for the 3' incision and the C-terminal half is responsible for the 5' incision. This Methanosarcina mazei (strain ATCC BAA-159 / DSM 3647 / Goe1 / Go1 / JCM 11833 / OCM 88) (Methanosarcina frisia) protein is UvrABC system protein C.